Consider the following 90-residue polypeptide: DNA-directed RNA polymerase subunit omega (90 aa).

Residues 69–90 form a disordered region; the sequence is RQEQQEQDAAELAAVSSITHNR.

This sequence belongs to the RNA polymerase subunit omega family. The RNAP catalytic core consists of 2 alpha, 1 beta, 1 beta' and 1 omega subunit. When a sigma factor is associated with the core the holoenzyme is formed, which can initiate transcription.

It catalyses the reaction RNA(n) + a ribonucleoside 5'-triphosphate = RNA(n+1) + diphosphate. Its function is as follows. Promotes RNA polymerase assembly. Latches the N- and C-terminal regions of the beta' subunit thereby facilitating its interaction with the beta and alpha subunits. The protein is DNA-directed RNA polymerase subunit omega of Aliivibrio fischeri (strain ATCC 700601 / ES114) (Vibrio fischeri).